The sequence spans 214 residues: Thymidylate kinase (214 aa).

ATP is bound at residue 10–17 (GGEGAGKS).

This sequence belongs to the thymidylate kinase family.

The enzyme catalyses dTMP + ATP = dTDP + ADP. In terms of biological role, phosphorylation of dTMP to form dTDP in both de novo and salvage pathways of dTTP synthesis. The sequence is that of Thymidylate kinase from Brucella suis biovar 1 (strain 1330).